Reading from the N-terminus, the 70-residue chain is DNA-directed RNA polymerase subunit epsilon (70 aa).

Belongs to the RNA polymerase subunit epsilon family. In terms of assembly, RNAP is composed of a core of 2 alpha, a beta and a beta' subunit. The core is associated with a delta subunit, and at least one of epsilon or omega. When a sigma factor is associated with the core the holoenzyme is formed, which can initiate transcription.

It catalyses the reaction RNA(n) + a ribonucleoside 5'-triphosphate = RNA(n+1) + diphosphate. A non-essential component of RNA polymerase (RNAP). The sequence is that of DNA-directed RNA polymerase subunit epsilon from Limosilactobacillus reuteri (strain DSM 20016) (Lactobacillus reuteri).